Consider the following 682-residue polypeptide: Potassium-transporting ATPase ATP-binding subunit (682 aa).

The next 4 helical transmembrane spans lie at 34–54 (PVMF…IAMA), 62–82 (ALFS…ANFA), 219–239 (IALT…TATL), and 254–274 (VLVA…LSAI). Aspartate 307 functions as the 4-aspartylphosphate intermediate in the catalytic mechanism. ATP-binding positions include aspartate 344, glutamate 348, 377-384 (FTAQSRMS), and lysine 395. Mg(2+)-binding residues include aspartate 518 and aspartate 522. Transmembrane regions (helical) follow at residues 588 to 608 (FAII…LNIM), 616 to 636 (AILS…PLAL), and 656 to 676 (IYGL…DLLL).

This sequence belongs to the cation transport ATPase (P-type) (TC 3.A.3) family. Type IA subfamily. As to quaternary structure, the system is composed of three essential subunits: KdpA, KdpB and KdpC.

It is found in the cell inner membrane. It catalyses the reaction K(+)(out) + ATP + H2O = K(+)(in) + ADP + phosphate + H(+). Its function is as follows. Part of the high-affinity ATP-driven potassium transport (or Kdp) system, which catalyzes the hydrolysis of ATP coupled with the electrogenic transport of potassium into the cytoplasm. This subunit is responsible for energy coupling to the transport system and for the release of the potassium ions to the cytoplasm. This Escherichia coli (strain SMS-3-5 / SECEC) protein is Potassium-transporting ATPase ATP-binding subunit.